A 382-amino-acid polypeptide reads, in one-letter code: Galactokinase (382 aa).

A substrate-binding site is contributed by 34 to 37 (EHTD). 124–130 (GAGLSSS) lines the ATP pocket. Mg(2+) is bound by residues Ser130 and Glu162. Asp174 (proton acceptor) is an active-site residue. A substrate-binding site is contributed by Tyr223.

It belongs to the GHMP kinase family. GalK subfamily.

The protein localises to the cytoplasm. The enzyme catalyses alpha-D-galactose + ATP = alpha-D-galactose 1-phosphate + ADP + H(+). It participates in carbohydrate metabolism; galactose metabolism. Catalyzes the transfer of the gamma-phosphate of ATP to D-galactose to form alpha-D-galactose-1-phosphate (Gal-1-P). The protein is Galactokinase of Escherichia coli O17:K52:H18 (strain UMN026 / ExPEC).